The following is an 82-amino-acid chain: Small ribosomal subunit protein bS16 (82 aa).

This sequence belongs to the bacterial ribosomal protein bS16 family.

This Aeromonas salmonicida (strain A449) protein is Small ribosomal subunit protein bS16.